The chain runs to 166 residues: Lipoprotein signal peptidase (166 aa).

The next 3 membrane-spanning stretches (helical) occupy residues 12-32, 70-90, and 102-122; these read WLWL…LILQ, WFFA…MYRA, and ALII…GFVV. Catalysis depends on residues D123 and D141. The chain crosses the membrane as a helical span at residues 142 to 162; the sequence is SAICFGAAMIVLEGFLPNAAA.

It belongs to the peptidase A8 family.

The protein localises to the cell inner membrane. It carries out the reaction Release of signal peptides from bacterial membrane prolipoproteins. Hydrolyzes -Xaa-Yaa-Zaa-|-(S,diacylglyceryl)Cys-, in which Xaa is hydrophobic (preferably Leu), and Yaa (Ala or Ser) and Zaa (Gly or Ala) have small, neutral side chains.. The protein operates within protein modification; lipoprotein biosynthesis (signal peptide cleavage). This protein specifically catalyzes the removal of signal peptides from prolipoproteins. In Enterobacter sp. (strain 638), this protein is Lipoprotein signal peptidase.